Consider the following 118-residue polypeptide: UPF0102 protein Nwi_0116 (118 aa).

The protein belongs to the UPF0102 family.

This is UPF0102 protein Nwi_0116 from Nitrobacter winogradskyi (strain ATCC 25391 / DSM 10237 / CIP 104748 / NCIMB 11846 / Nb-255).